A 631-amino-acid polypeptide reads, in one-letter code: Sperm-associated antigen 16 protein (631 aa).

Positions 152–267 (DVYTQIMLLE…LQETLKKLQR (116 aa)) form a coiled coil. A disordered region spans residues 266–332 (QRGHSYHGPQ…QPNPNLNVSK (67 aa)). 2 stretches are compositionally biased toward basic and acidic residues: residues 277-287 (KVDHSREKENA) and 295-304 (GLREAREQNK). 7 WD repeats span residues 350–389 (LHEL…VLLT), 392–431 (GHTD…CILT), 434–473 (GHSR…CRCT), 476–515 (GHTD…CEQS), 518–557 (GHMH…PIVS), 560–600 (IGPS…HKLM), and 601–630 (GHEN…VRTW).

In terms of assembly, interacts with SPAG6 and STK36. Post-translationally, phosphorylated by TSSK2. As to expression, isoform 1 is detected in testis. Isoform 4 is detected in testis and brain, and at lower levels in kidney, heart, pancreas, thyroid, ovary, adrenal gland, spinal cord, trachea and liver.

The protein localises to the cytoplasm. It localises to the cytoskeleton. Its subcellular location is the flagellum axoneme. The protein resides in the cilium axoneme. It is found in the cell projection. The protein localises to the cilium. It localises to the flagellum. Necessary for sperm flagellar function. Plays a role in motile ciliogenesis. May help to recruit STK36 to the cilium or apical surface of the cell to initiate subsequent steps of construction of the central pair apparatus of motile cilia. This chain is Sperm-associated antigen 16 protein (SPAG16), found in Homo sapiens (Human).